A 665-amino-acid polypeptide reads, in one-letter code: SH3 domain-containing kinase-binding protein 1 (665 aa).

SH3 domains follow at residues M1–K58 and R98–G157. 4 positions are modified to phosphoserine: S156, S159, S183, and S230. Residues S159 to V200 form a disordered region. Over residues E177–G195 the composition is skewed to low complexity. T254 is subject to Phosphothreonine. Residues K267–P328 enclose the SH3 3 domain. Disordered regions lie at residues P328 to S444 and D467 to E610. A compositionally biased stretch (basic and acidic residues) spans T355–L390. A Phosphoserine modification is found at S436. A compositionally biased stretch (polar residues) spans V469–P484. Residues P491–P510 show a composition bias toward low complexity. Phosphoserine occurs at positions 509, 511, and 521. The span at E517 to K531 shows a compositional bias: basic and acidic residues. Residues K535–K546 show a composition bias toward polar residues. The segment covering A564 to G582 has biased composition (low complexity). S587 carries the post-translational modification Phosphoserine. The stretch at A602–S664 forms a coiled coil.

In terms of assembly, can self-associate and form homotetramers. Interacts with CD2, F-actin capping protein, PIK3R3, GRB2, EGFR, MET, BLNK, MAP3K4, PDCD6IP, SPRY2, ARHGAP17, ARHGAP27, MAGI2, CRK, BCAR1, SOS1, ASAP1, ARAP3, HIP1R, SYNJ2, INPP5D and STAP1. Interacts with E3 ubiquitin-protein ligases CBL and CBLB, but does not interact with CBLC. Two molecules of SH3KBP1 seem to bind through their respective SH3 1 domain to one molecule of CBLB. The interaction with CBL or CBLB and EGFR is increased upon EGF stimulation. The interaction with CBL is attenuated by PDCD6IP. Interacts (via SH3 domains) with ARAP1. The interaction is independent of EGF and does not affect ARAP1 GTPase-activating activity but is involved in regulating ubiquitination and endocytic trafficking of EGFR. ARAP1 competes with CBL for binding to SH3KBP1 and prevents interaction of CBL with SH3KBP1; this is likely to regulate SH3KBP1-mediated internalization of EGFR. Interacts through its proline-rich region with the SH3 domain of endophilins SH3GL1, SH3GL2 and SH3GL3. The SH3KBP1-endophilin complex seems to associate with a complex containing the phosphorylated receptor (EGFR or MET) and phosphorylated CBL. Probably associates with ASAP1 and phosphorylated EGFR. Probably part of a complex consisting of at least SH3KBP1, ASAP1 and ARAP3. Interacts with focal adhesion kinases PTK2/FAK1 and PTK2B/PYK2, probably as a dimer. Interacts with DAB2 and probably associates with chathrin through its interaction with DAB2. Part of a complex consisting of SH3KBP1, DAB2, and clathrin heavy chain. DAB2 and clathrin dissociate from SH3KBP1 following growth factor treatment, enabling interaction with CBL. Interacts with DDN and probably associates with MAGI2 through its interaction with DDN. Interacts with the SH3 domains of SRC tyrosine-protein kinases SRC, LCK, LYN, FGR, FYN and HCK. Interacts with TRADD, BIRC2, TRAF1, TRAF2 and TNFR1, and the association with a TNFR1-associated complex upon stimulation with TNF-alpha seems to be mediated by SRC. Interacts (via SH3 domains) with SHKBP1 (via PXXXPR motifs). Interaction with CBL is abolished in the presence of SHKBP1. Interacts (via SH3 domains) with ZFP36 (via extreme C-terminal region). Interacts with MAP3K4; this interaction enhances the association with ZFP36. (Microbial infection) Interacts (via SH3 domains) with Chikungunya virus non-structural protein 3 (via C-terminus); this interaction plays a role in initiation of viral replication. Post-translationally, monoubiquitinated by CBL and CBLB after EGF stimulation; probably on its C-terminus. In terms of tissue distribution, ubiquitously expressed. Also expressed in some cancer cell lines.

The protein localises to the cytoplasm. It is found in the cytoskeleton. The protein resides in the cytoplasmic vesicle membrane. It localises to the synapse. Its subcellular location is the synaptosome. The protein localises to the cell junction. It is found in the focal adhesion. Functionally, adapter protein involved in regulating diverse signal transduction pathways. Involved in the regulation of endocytosis and lysosomal degradation of ligand-induced receptor tyrosine kinases, including EGFR and MET/hepatocyte growth factor receptor, through an association with CBL and endophilins. The association with CBL, and thus the receptor internalization, may be inhibited by an interaction with PDCD6IP and/or SPRY2. Involved in regulation of ligand-dependent endocytosis of the IgE receptor. Attenuates phosphatidylinositol 3-kinase activity by interaction with its regulatory subunit. May be involved in regulation of cell adhesion; promotes the interaction between TTK2B and PDCD6IP. May be involved in the regulation of cellular stress response via the MAPK pathways through its interaction with MAP3K4. Is involved in modulation of tumor necrosis factor mediated apoptosis. Plays a role in the regulation of cell morphology and cytoskeletal organization. Required in the control of cell shape and migration. Has an essential role in the stimulation of B cell activation. This is SH3 domain-containing kinase-binding protein 1 (SH3KBP1) from Homo sapiens (Human).